Consider the following 438-residue polypeptide: Exodeoxyribonuclease 7 large subunit (438 aa).

The segment at 406–438 is disordered; it reads ATSTGPTDDIPSSAARLPASPAPDARPASGPES.

This sequence belongs to the XseA family. Heterooligomer composed of large and small subunits.

The protein resides in the cytoplasm. It carries out the reaction Exonucleolytic cleavage in either 5'- to 3'- or 3'- to 5'-direction to yield nucleoside 5'-phosphates.. In terms of biological role, bidirectionally degrades single-stranded DNA into large acid-insoluble oligonucleotides, which are then degraded further into small acid-soluble oligonucleotides. This Clavibacter sepedonicus (Clavibacter michiganensis subsp. sepedonicus) protein is Exodeoxyribonuclease 7 large subunit.